A 614-amino-acid chain; its full sequence is Chaperone protein DnaK (614 aa).

At Thr-176 the chain carries Phosphothreonine; by autocatalysis. Residues 576–614 (YQQQQSQGGEAGAANGDASKKDDNTVDGDFHEVHDDDKK) are disordered. Residues 577 to 589 (QQQQSQGGEAGAA) are compositionally biased toward low complexity. Basic and acidic residues predominate over residues 593 to 614 (ASKKDDNTVDGDFHEVHDDDKK).

Belongs to the heat shock protein 70 family.

Functionally, acts as a chaperone. The protein is Chaperone protein DnaK of Fructilactobacillus sanfranciscensis (Lactobacillus sanfranciscensis).